The following is a 492-amino-acid chain: GDP-fucose protein O-fucosyltransferase 4 (492 aa).

Residues 1-7 (MAAGPIR) lie on the Cytoplasmic side of the membrane. A helical; Signal-anchor for type II membrane protein membrane pass occupies residues 8–24 (VVLVLLGVLSVCAASGH). Topologically, residues 25-492 (GSVAEREAGG…HEIFMKRQHL (468 aa)) are lumenal. Residue Asn166 is glycosylated (N-linked (GlcNAc...) asparagine). Cys389 and Cys392 are oxidised to a cystine. Residue Asn443 is glycosylated (N-linked (GlcNAc...) asparagine).

This sequence belongs to the glycosyltransferase 10 family.

The protein resides in the endoplasmic reticulum membrane. It catalyses the reaction L-threonyl-[protein] + GDP-beta-L-fucose = 3-O-(alpha-L-fucosyl)-L-threonyl-[protein] + GDP + H(+). It carries out the reaction L-seryl-[protein] + GDP-beta-L-fucose = 3-O-(alpha-L-fucosyl)-L-seryl-[protein] + GDP + H(+). It participates in protein modification; protein glycosylation. Functionally, protein O-fucosyltransferase that specifically catalyzes O-fucosylation of serine or threonine residues in EMI domains of target proteins, such as MMRN1, MMRN2 and EMID1. Attaches fucose through an O-glycosidic linkage. O-fucosylation of EMI domain-containing proteins may be required for facilitating protein folding and secretion. Also shows minor alpha-(1,3)-fucosyltransferase activity toward activity toward biantennary N-glycan acceptors. However, this was tested with a library of synthetic substrates and this activity is unsure in vivo. This chain is GDP-fucose protein O-fucosyltransferase 4, found in Homo sapiens (Human).